A 424-amino-acid polypeptide reads, in one-letter code: Adenylyltransferase and sulfurtransferase UBA4 (424 aa).

Residues Gly76, Asp97, Thr104 to Arg108, Lys121, and Asp165 to Ser166 each bind ATP. The Zn(2+) site is built by Cys206 and Cys209. Cys223 serves as the catalytic Glycyl thioester intermediate; for adenylyltransferase activity. Cys283 serves as a coordination point for Zn(2+). The Rhodanese domain maps to Arg326–Pro422. The active-site Cysteine persulfide intermediate; for sulfurtransferase activity is Cys382.

It in the N-terminal section; belongs to the HesA/MoeB/ThiF family. UBA4 subfamily. Zn(2+) serves as cofactor.

The protein resides in the cytoplasm. It localises to the cytosol. Its pathway is tRNA modification; 5-methoxycarbonylmethyl-2-thiouridine-tRNA biosynthesis. Its function is as follows. Plays a central role in 2-thiolation of mcm(5)S(2)U at tRNA wobble positions of cytosolic tRNA(Lys), tRNA(Glu) and tRNA(Gln). Acts by mediating the C-terminal thiocarboxylation of sulfur carrier URM1. Its N-terminus first activates URM1 as acyl-adenylate (-COAMP), then the persulfide sulfur on the catalytic cysteine is transferred to URM1 to form thiocarboxylation (-COSH) of its C-terminus. The reaction probably involves hydrogen sulfide that is generated from the persulfide intermediate and that acts as a nucleophile towards URM1. Subsequently, a transient disulfide bond is formed. Does not use thiosulfate as sulfur donor; NFS1 probably acting as a sulfur donor for thiocarboxylation reactions. Prior mcm(5) tRNA modification by the elongator complex is required for 2-thiolation. May also be involved in protein urmylation. This is Adenylyltransferase and sulfurtransferase UBA4 from Meyerozyma guilliermondii (strain ATCC 6260 / CBS 566 / DSM 6381 / JCM 1539 / NBRC 10279 / NRRL Y-324) (Yeast).